The chain runs to 462 residues: CCA-adding enzyme (462 aa).

The ATP site is built by Ser-54 and Arg-57. Positions 54 and 57 each coordinate CTP. The Mg(2+) site is built by Asp-66, Asp-68, and Asp-117. His-140, Lys-160, and Tyr-169 together coordinate ATP. Residues His-140, Lys-160, and Tyr-169 each coordinate CTP.

This sequence belongs to the tRNA nucleotidyltransferase/poly(A) polymerase family. Archaeal CCA-adding enzyme subfamily. In terms of assembly, homodimer. The cofactor is Mg(2+).

The catalysed reaction is a tRNA precursor + 2 CTP + ATP = a tRNA with a 3' CCA end + 3 diphosphate. It carries out the reaction a tRNA with a 3' CCA end + 2 CTP + ATP = a tRNA with a 3' CCACCA end + 3 diphosphate. Functionally, catalyzes the addition and repair of the essential 3'-terminal CCA sequence in tRNAs without using a nucleic acid template. Adds these three nucleotides in the order of C, C, and A to the tRNA nucleotide-73, using CTP and ATP as substrates and producing inorganic pyrophosphate. tRNA 3'-terminal CCA addition is required both for tRNA processing and repair. Also involved in tRNA surveillance by mediating tandem CCA addition to generate a CCACCA at the 3' terminus of unstable tRNAs. While stable tRNAs receive only 3'-terminal CCA, unstable tRNAs are marked with CCACCA and rapidly degraded. The polypeptide is CCA-adding enzyme (Halorubrum lacusprofundi (strain ATCC 49239 / DSM 5036 / JCM 8891 / ACAM 34)).